The sequence spans 500 residues: Sulfate adenylyltransferase (500 aa).

The tract at residues 1 to 165 is N-terminal; sequence MLSPHGGILQ…LEAIQLPAHY (165 aa). The segment at 166–390 is catalytic; sequence DYLNLRKSPA…LRQYNPPRYR (225 aa). Gln193 contributes to the sulfate binding site. Residues 193–196 and 287–290 each bind ATP; these read QTRN and GRDH. Residues Thr194, Arg195, and Asn196 contribute to the active site. Arg195 provides a ligand contact to sulfate. Ala291 lines the sulfate pocket. Residue Ile329 participates in ATP binding. Residues 391–500 are required for oligomerization; adenylyl-sulfate kinase-like; the sequence is QGFVIVVNHE…FLEDNKFFQF (110 aa).

This sequence belongs to the sulfate adenylyltransferase family. Homohexamer. Dimer of trimers.

It localises to the cytoplasm. The catalysed reaction is sulfate + ATP + H(+) = adenosine 5'-phosphosulfate + diphosphate. It functions in the pathway sulfur metabolism; hydrogen sulfide biosynthesis; sulfite from sulfate: step 1/3. Catalyzes the first intracellular reaction of sulfate assimilation, forming adenosine-5'-phosphosulfate (APS) from inorganic sulfate and ATP. Plays an important role in sulfate activation as a component of the biosynthesis pathway of sulfur-containing amino acids. The polypeptide is Sulfate adenylyltransferase (Eremothecium gossypii (strain ATCC 10895 / CBS 109.51 / FGSC 9923 / NRRL Y-1056) (Yeast)).